The primary structure comprises 182 residues: UPF0397 protein SPG_0438 (182 aa).

The next 5 helical transmembrane spans lie at 10–30 (VVAVGIGAALFVVIGMINIPT), 46–66 (LLSIIFGPIIGLLVGLIGHAI), 73–93 (YGLWWTWIIASGLFGLVVGLF), 109–129 (ILIFNLIQLLANALVWGVLAP), and 148–168 (IVAGIANGVSVAIAGTLLLLA).

Belongs to the UPF0397 family.

Its subcellular location is the cell membrane. This chain is UPF0397 protein SPG_0438, found in Streptococcus pneumoniae serotype 19F (strain G54).